The chain runs to 368 residues: MFAKGKGSAVPSDGQAREKLALYVYEYLLHVGAQKSAQTFLSEIRWEKNITLGEPPGFLHSWWCVFWDLYCAAPERRDTCEHSSEAKAFHDYSAAAAPSPVLGNIPPNDGMPGGPIPPGFFQGPPGSQPSPHAQPPPHNPNSMMGPHSQPPGAVPGTQPLLPNSMDPTRQQGHPNMGGPMQRMNPPRGMGPMGPGPQNYGSGMRPPPNSLGPGMPGINMGPGAGRPWPNPSSANSIPYSSSSPGTYVGPPGGGGPPGTPIMPSPADSTNSSDNIYTMINPVPPAGSRSNFPMGPGSDGPMGGMGGMEPHHMNGSLGSGDIDGLPKNSPNNISGISNPPGTPRDDGELGGNFLHSFQNDNYSPSMTMSV.

One can recognise a LisH domain in the interval 16 to 48 (AREKLALYVYEYLLHVGAQKSAQTFLSEIRWEK). Residues 100 to 368 (PVLGNIPPND…NYSPSMTMSV (269 aa)) form a disordered region. A compositionally biased stretch (pro residues) spans 126-139 (GSQPSPHAQPPPHN). Composition is skewed to low complexity over residues 174–189 (PNMG…PRGM), 211–220 (GPGMPGINMG), and 230–248 (PSSA…TYVG). Residues 252 to 262 (GGGPPGTPIMP) are compositionally biased toward pro residues. Residues 265–276 (ADSTNSSDNIYT) show a composition bias toward polar residues. Residues 295-305 (GSDGPMGGMGG) are compositionally biased toward gly residues. Over residues 326–337 (NSPNNISGISNP) the composition is skewed to low complexity. Residues 353-368 (HSFQNDNYSPSMTMSV) show a composition bias toward polar residues.

In terms of tissue distribution, expressed in embryonic fibroblasts and chondrocytes.

It is found in the nucleus. Its function is as follows. May be involved in transcription regulation of the alpha 2(I) collagen gene where it binds to the single-stranded polypyrimidine sequences in the promoter region. This is Single-stranded DNA-binding protein 3 (SSBP3) from Gallus gallus (Chicken).